The primary structure comprises 391 residues: Chorismate synthase (391 aa).

Arg-48 contributes to the NADP(+) binding site. Residues 126–128 (RSS), Gly-287, 302–306 (KPTSS), and Arg-329 contribute to the FMN site.

The protein belongs to the chorismate synthase family. It depends on FMNH2 as a cofactor.

It carries out the reaction 5-O-(1-carboxyvinyl)-3-phosphoshikimate = chorismate + phosphate. It functions in the pathway metabolic intermediate biosynthesis; chorismate biosynthesis; chorismate from D-erythrose 4-phosphate and phosphoenolpyruvate: step 7/7. Functionally, catalyzes the anti-1,4-elimination of the C-3 phosphate and the C-6 proR hydrogen from 5-enolpyruvylshikimate-3-phosphate (EPSP) to yield chorismate, which is the branch point compound that serves as the starting substrate for the three terminal pathways of aromatic amino acid biosynthesis. This reaction introduces a second double bond into the aromatic ring system. This is Chorismate synthase from Sulfolobus acidocaldarius (strain ATCC 33909 / DSM 639 / JCM 8929 / NBRC 15157 / NCIMB 11770).